A 568-amino-acid chain; its full sequence is DNA ligase (568 aa).

Glu-249 contacts ATP. The N6-AMP-lysine intermediate role is filled by Lys-251. Positions 256, 271, 301, 342, 418, and 424 each coordinate ATP.

Belongs to the ATP-dependent DNA ligase family. Mg(2+) serves as cofactor.

The enzyme catalyses ATP + (deoxyribonucleotide)n-3'-hydroxyl + 5'-phospho-(deoxyribonucleotide)m = (deoxyribonucleotide)n+m + AMP + diphosphate.. Its function is as follows. DNA ligase that seals nicks in double-stranded DNA during DNA replication, DNA recombination and DNA repair. This is DNA ligase from Methanocella arvoryzae (strain DSM 22066 / NBRC 105507 / MRE50).